Reading from the N-terminus, the 427-residue chain is Serine--tRNA ligase (427 aa).

231–233 (TAE) lines the L-serine pocket. 262–264 (RSE) serves as a coordination point for ATP. Residue glutamate 285 coordinates L-serine. 349 to 352 (EISS) serves as a coordination point for ATP. Serine 385 is a binding site for L-serine.

This sequence belongs to the class-II aminoacyl-tRNA synthetase family. Type-1 seryl-tRNA synthetase subfamily. In terms of assembly, homodimer. The tRNA molecule binds across the dimer.

Its subcellular location is the cytoplasm. It carries out the reaction tRNA(Ser) + L-serine + ATP = L-seryl-tRNA(Ser) + AMP + diphosphate + H(+). The enzyme catalyses tRNA(Sec) + L-serine + ATP = L-seryl-tRNA(Sec) + AMP + diphosphate + H(+). It functions in the pathway aminoacyl-tRNA biosynthesis; selenocysteinyl-tRNA(Sec) biosynthesis; L-seryl-tRNA(Sec) from L-serine and tRNA(Sec): step 1/1. Catalyzes the attachment of serine to tRNA(Ser). Is also able to aminoacylate tRNA(Sec) with serine, to form the misacylated tRNA L-seryl-tRNA(Sec), which will be further converted into selenocysteinyl-tRNA(Sec). In Staphylococcus saprophyticus subsp. saprophyticus (strain ATCC 15305 / DSM 20229 / NCIMB 8711 / NCTC 7292 / S-41), this protein is Serine--tRNA ligase.